The sequence spans 73 residues: Translation initiation factor IF-1 (73 aa).

An S1-like domain is found at 1–73 (MSEKEAGIEV…SRGRITYRDK (73 aa)).

Belongs to the IF-1 family. In terms of assembly, component of the 30S ribosomal translation pre-initiation complex which assembles on the 30S ribosome in the order IF-2 and IF-3, IF-1 and N-formylmethionyl-tRNA(fMet); mRNA recruitment can occur at any time during PIC assembly.

It localises to the cytoplasm. One of the essential components for the initiation of protein synthesis. Stabilizes the binding of IF-2 and IF-3 on the 30S subunit to which N-formylmethionyl-tRNA(fMet) subsequently binds. Helps modulate mRNA selection, yielding the 30S pre-initiation complex (PIC). Upon addition of the 50S ribosomal subunit IF-1, IF-2 and IF-3 are released leaving the mature 70S translation initiation complex. This is Translation initiation factor IF-1 from Anaeromyxobacter dehalogenans (strain 2CP-C).